A 131-amino-acid chain; its full sequence is Profilin-6 (131 aa).

Belongs to the profilin family. Occurs in many kinds of cells as a complex with monomeric actin in a 1:1 ratio.

It is found in the cytoplasm. It localises to the cytoskeleton. Functionally, binds to actin and affects the structure of the cytoskeleton. At high concentrations, profilin prevents the polymerization of actin, whereas it enhances it at low concentrations. By binding to PIP2, it inhibits the formation of IP3 and DG. The chain is Profilin-6 from Hevea brasiliensis (Para rubber tree).